The chain runs to 647 residues: MASQQNKHAFLSKNRIFHNPDNVSSSKSRNLMDITNTTNTMNGSRPSSMKSSLALPPVKDSFPSVSRSASLNINMSKIKDLKDRQDKIRFQRHTLRTQLIECEREIKTIKFRDLNKSRFELYKKKSKQAKYLKQVRDLTQNLNSKDGERADLIKKNKSALATLQAELDQNLILKRQESQELYNNKLIFWENELQIMENVEPDHEITEEISQLKKTLQELNINWANLQKQNLERQVNHESQLRKDFIAFKEAKLKSMENLTNKHRELLDQIATLQSESEKLHKEIMDIDRQAEYSEQNISEINENIKQLELANNPLISKSLQNSQDLEHLQNQMENLKEMASKQEKFYNDTYNTVEKELLRSRRLENSIIEQKGTMRCYAYVMEQNLPENLLFDYENGVITQGLSEHVYKFNRVIPHLKVSEDKFFTQEYSVYHDMCLNQKKNFNLISLSTTPHGSLRESLIKFLAEKDTIYQKQYVITLQFVFLSDDEFSQDMLLDYSHNDKDSIKLKFEKHSISLDSKLVIIENGLEDLPLNFSCDEHPNLPHSGMGIIKVQFFPRDSKSDGNNDPVPVDFYFIELNNLKSIEQFDKSIFKKESCETPIALVLKKLISDTKSFFLLNLNDSKNVNKLLTISEEVQTQLCKRKKKLT.

A compositionally biased stretch (polar residues) spans 36–51 (NTTNTMNGSRPSSMKS). Residues 36–55 (NTTNTMNGSRPSSMKSSLAL) form a disordered region. The stretch at 202-350 (DHEITEEISQ…SKQEKFYNDT (149 aa)) forms a coiled coil.

Interacts with KAR3; the interaction is direct.

It is found in the cytoplasm. The protein localises to the cytoskeleton. Its subcellular location is the microtubule organizing center. The protein resides in the spindle pole body. It localises to the nucleus. Its function is as follows. Together with the minus end-directed microtubule motor KAR3, plays a role in microtubule organization. Recruits KAR3 to microtubules, and together they may stabilize the polymers. The KAR3-VIK1 heterodimer cross-links anti-parallel microtubules. Targets and/or maintains KAR3 at the spindle pole body during vegetative growth. This Saccharomyces cerevisiae (strain ATCC 204508 / S288c) (Baker's yeast) protein is Spindle pole body-associated protein VIK1 (VIK1).